The chain runs to 136 residues: Large-conductance mechanosensitive channel (136 aa).

2 helical membrane passes run 10–30 (FAMRGNVVDLAVGVIIGAAFG) and 76–96 (GSFIQSVFDFVIVALAIFSAV).

It belongs to the MscL family. Homopentamer.

The protein localises to the cell inner membrane. Channel that opens in response to stretch forces in the membrane lipid bilayer. May participate in the regulation of osmotic pressure changes within the cell. The sequence is that of Large-conductance mechanosensitive channel from Yersinia enterocolitica serotype O:8 / biotype 1B (strain NCTC 13174 / 8081).